Here is a 368-residue protein sequence, read N- to C-terminus: 4-hydroxy-3-methylbut-2-en-1-yl diphosphate synthase (flavodoxin) (368 aa).

Residues cysteine 271, cysteine 274, cysteine 306, and glutamate 313 each contribute to the [4Fe-4S] cluster site.

Belongs to the IspG family. The cofactor is [4Fe-4S] cluster.

The catalysed reaction is (2E)-4-hydroxy-3-methylbut-2-enyl diphosphate + oxidized [flavodoxin] + H2O + 2 H(+) = 2-C-methyl-D-erythritol 2,4-cyclic diphosphate + reduced [flavodoxin]. Its pathway is isoprenoid biosynthesis; isopentenyl diphosphate biosynthesis via DXP pathway; isopentenyl diphosphate from 1-deoxy-D-xylulose 5-phosphate: step 5/6. Converts 2C-methyl-D-erythritol 2,4-cyclodiphosphate (ME-2,4cPP) into 1-hydroxy-2-methyl-2-(E)-butenyl 4-diphosphate. In Histophilus somni (strain 129Pt) (Haemophilus somnus), this protein is 4-hydroxy-3-methylbut-2-en-1-yl diphosphate synthase (flavodoxin).